We begin with the raw amino-acid sequence, 482 residues long: MASIRELHQQLVSKERSAKEITQDALEKIQQLEPKVHAFLTLTAEQALAQAERVDQQIATGTEIGLLAGIPIAIKDNLCTKGIPTTCGSKILQGFIPPYESTVTSRLAAAGAVMVGKTNLDEFAMGSSTENSAYQLTANPWDLQRVPGGSSGGSAAAVAAGETLIALGSDTGGSIRQPASFCGVVGLKPTYGLVSRYGLVAYASSLDQIGPFATNVEDAALLLGAIAGHDPQDSTSLNVPIPDYTQFLIPDLKGKKIGIIQETYGEGLDPQVEQVTHKAIQQLEELGAEVREISCPRFRYGLPTYYIIAPSEASANLARYDGVKYGFRSPDPENLLSMYTRTRAEGFGPEVKRRIMIGTYALSAGYYDAYYLKAQKVRTLIKQDFEAAFEQVDVLVCPTAPTTAFAAGAKTADPLSMYLSDLMTIPVNLAGLPGLSLPCGFDQQGLPIGLQLIGNVLREDLVFQVAYAYEQATPWHDRHPQL.

Active-site charge relay system residues include lysine 75 and serine 150. Serine 174 serves as the catalytic Acyl-ester intermediate.

It belongs to the amidase family. GatA subfamily. Heterotrimer of A, B and C subunits.

The catalysed reaction is L-glutamyl-tRNA(Gln) + L-glutamine + ATP + H2O = L-glutaminyl-tRNA(Gln) + L-glutamate + ADP + phosphate + H(+). Its function is as follows. Allows the formation of correctly charged Gln-tRNA(Gln) through the transamidation of misacylated Glu-tRNA(Gln) in organisms which lack glutaminyl-tRNA synthetase. The reaction takes place in the presence of glutamine and ATP through an activated gamma-phospho-Glu-tRNA(Gln). The sequence is that of Glutamyl-tRNA(Gln) amidotransferase subunit A from Cyanothece sp. (strain PCC 7425 / ATCC 29141).